The chain runs to 139 residues: Actin-depolymerizing factor 1 (139 aa).

Residues 5 to 139 (ASGMAVCDEC…SMDIVKSRAL (135 aa)) form the ADF-H domain.

The protein belongs to the actin-binding proteins ADF family.

Its function is as follows. Actin-depolymerizing protein. Severs actin filaments (F-actin) and binds to actin monomers. This Oryza sativa subsp. japonica (Rice) protein is Actin-depolymerizing factor 1 (ADF1).